The primary structure comprises 112 residues: UPF0122 protein CPR_1686 (112 aa).

The protein belongs to the UPF0122 family.

Its function is as follows. Might take part in the signal recognition particle (SRP) pathway. This is inferred from the conservation of its genetic proximity to ftsY/ffh. May be a regulatory protein. The sequence is that of UPF0122 protein CPR_1686 from Clostridium perfringens (strain SM101 / Type A).